Here is a 185-residue protein sequence, read N- to C-terminus: Ribosome maturation factor RimP (185 aa).

The interval 162–185 is disordered; the sequence is VRLERAADGAPERGGDRGDTEESR.

It belongs to the RimP family.

Its subcellular location is the cytoplasm. Functionally, required for maturation of 30S ribosomal subunits. The sequence is that of Ribosome maturation factor RimP from Saccharopolyspora erythraea (strain ATCC 11635 / DSM 40517 / JCM 4748 / NBRC 13426 / NCIMB 8594 / NRRL 2338).